The chain runs to 286 residues: Pantothenate synthetase (286 aa).

An ATP-binding site is contributed by 30 to 37 (MGNLHEGH). His-37 serves as the catalytic Proton donor. Gln-64 serves as a coordination point for (R)-pantoate. Beta-alanine is bound at residue Gln-64. 151–154 (GKKD) is an ATP binding site. Residue Gln-157 participates in (R)-pantoate binding. ATP-binding positions include Leu-180 and 188–191 (LSSR).

Belongs to the pantothenate synthetase family. As to quaternary structure, homodimer.

Its subcellular location is the cytoplasm. It catalyses the reaction (R)-pantoate + beta-alanine + ATP = (R)-pantothenate + AMP + diphosphate + H(+). The protein operates within cofactor biosynthesis; (R)-pantothenate biosynthesis; (R)-pantothenate from (R)-pantoate and beta-alanine: step 1/1. Catalyzes the condensation of pantoate with beta-alanine in an ATP-dependent reaction via a pantoyl-adenylate intermediate. The chain is Pantothenate synthetase from Leptothrix cholodnii (strain ATCC 51168 / LMG 8142 / SP-6) (Leptothrix discophora (strain SP-6)).